We begin with the raw amino-acid sequence, 563 residues long: MGELGPASAQHGSDSISFSGSYTQPLGAPQPPNEPHAISVSLPTWEAVTAVMAGADWAICQLQTSYPRFDIHKCVRELHDAVLARFKHPAHTVCRAFPSPEAAERFVSRLQREDPILSVHTARFHLPHDAVPELAKWAAFSVVLFNESLEEVAFEFWEWFGDGISSRHAEFCLTQFSFLNTGSDQPEYQTVGQDSHDLSAMNLPEWIDSSTKDKMDIKSRLASSATSADPALKPMGNDDVLLYATGMAAISAIARALARTSDDSGAVVYGWPYSGTPHCVQGCGFKRYTMYGHGSKADLDSLETLLVSETRFTVLFCEITSNPQLSTPDLHRIRDLADRFGFIVVCDDTLGTSVNVDILPYVDVIITSLTKIFSGAGNVMGGSLMINPNSGHYSTLRALLTTTYEDLYFPLDAKTIARNSSDFAARVHKCNKSALQIANLLNSHASVESVNYPTMVPTAPLYERYRRPDGGYGFLLSVIFREPESAVLFYDKLDVWKGPTVGTNFSISIPYSALAHAKEQDWAASHGVPKHIVRLSVGLEDYGDLSERVNRALREVELREKMG.

A disordered region spans residues 1–37 (MGELGPASAQHGSDSISFSGSYTQPLGAPQPPNEPHA). Over residues 10-24 (QHGSDSISFSGSYTQ) the composition is skewed to polar residues.

Belongs to the trans-sulfuration enzymes family. MET7 subfamily. It depends on pyridoxal 5'-phosphate as a cofactor.

The catalysed reaction is cyclo(L-arginyl-(Z)-dehydro-3,4-dihydroxytyrosyl) + O-acetyl-L-homoserine = cyclo(L-arginyl-(Z)-dehydro-4-O-homoseryl-tyrosyl) + acetate + H(+). The protein operates within secondary metabolite biosynthesis. Its function is as follows. Cystathionine gamma-synthase-like protein; part of the ank cluster that mediates the biosynthesis of NK13650 C, a highly modified cyclo-arginine-tyrosine dipeptide. AnkD catalyzes the attachment of L-homoserine moiety using O-acetyl-L-homoserine as co-substrate. Within the pathway, the cyclodipeptide synthase ankA acts as the scaffold-generating enzyme and is responsible for formation of the cyclo-Arg-Tyr diketopiperazine (cRY) from L-Arg and L-Tyr. The ankA product cRY is desaturated by the cytochrome P450 monooxygenase ankB to yield a dehydro-cyclodipeptide intermediate. The FAD-dependent monooxygenase ankC then installs the m-OH, ankD catalyzes the attachment of L-homoserine, and ankE ligates citrate to the ankD product to yield NK13650 B. The O-methyltransferase ankF is responsible for methylation of the C-17 phenol group of NK13650 B to produce NK13650 D. Amidation of NK13650 D with L-Asp by ankG then leads to the production of NK13650 C, whereas amidation of NK13650 B produces NK13650 A. The protein is Cystathionine gamma-synthase-like protein ankD of Aspergillus thermomutatus (Neosartorya pseudofischeri).